The following is a 406-amino-acid chain: Probable transcription factor FPSE_09188 (406 aa).

Positions 1 to 72 (MELPTYAVSQ…PKGSSSRCNG (72 aa)) are disordered. Residues 7–20 (AVSQSLLASRSVSS) show a composition bias toward low complexity.

Belongs to the bZIP family.

It is found in the nucleus. The two putative transcription factors FPSE_09188 and FPSE_09189 could be responsible for orchestrating expression of the W493 A and B biosynthesis cluster genes. W493 A and B consist of six amino acid residues D-allo-thr, L-Ala, D-Ala, L-Gln, D-Tyr, and L-Val/L-Ile linked to a 3-hydroxy-4-methyltetradecanoic acid polyketide chain. In Fusarium pseudograminearum (strain CS3096) (Wheat and barley crown-rot fungus), this protein is Probable transcription factor FPSE_09188.